Consider the following 419-residue polypeptide: UDP-N-acetylglucosamine 1-carboxyvinyltransferase (419 aa).

22 to 23 (KN) contacts phosphoenolpyruvate. Arg92 provides a ligand contact to UDP-N-acetyl-alpha-D-glucosamine. The Proton donor role is filled by Cys116. Cys116 bears the 2-(S-cysteinyl)pyruvic acid O-phosphothioketal mark. UDP-N-acetyl-alpha-D-glucosamine is bound by residues 121–125 (RPIDL), Asp307, and Leu329.

It belongs to the EPSP synthase family. MurA subfamily.

Its subcellular location is the cytoplasm. The catalysed reaction is phosphoenolpyruvate + UDP-N-acetyl-alpha-D-glucosamine = UDP-N-acetyl-3-O-(1-carboxyvinyl)-alpha-D-glucosamine + phosphate. It participates in cell wall biogenesis; peptidoglycan biosynthesis. Cell wall formation. Adds enolpyruvyl to UDP-N-acetylglucosamine. The chain is UDP-N-acetylglucosamine 1-carboxyvinyltransferase from Campylobacter fetus subsp. fetus (strain 82-40).